The primary structure comprises 144 residues: Putative acetyltransferase SAOUHSC_00995 (144 aa).

The 141-residue stretch at 1–141 folds into the N-acetyltransferase domain; sequence MFSKVNNQKM…EHIEMTKKLT (141 aa). Residues 71 to 73, G79, and 112 to 114 each bind CoA; these read VAV and PFY.

This sequence belongs to the UPF0039 (ElaA) family.

Could catalyze the transfer of an acetyl group from acetyl coenzyme A (AcCoA) to an acceptor substrate and release both CoA and the acetylated product. This Staphylococcus aureus (strain NCTC 8325 / PS 47) protein is Putative acetyltransferase SAOUHSC_00995.